Here is a 44-residue protein sequence, read N- to C-terminus: Cytochrome b559 subunit beta (44 aa).

The helical transmembrane segment at 19–35 (WIAVHTLAVPSVFFLGA) threads the bilayer. His-23 is a binding site for heme.

This sequence belongs to the PsbE/PsbF family. In terms of assembly, heterodimer of an alpha subunit and a beta subunit. PSII is composed of 1 copy each of membrane proteins PsbA, PsbB, PsbC, PsbD, PsbE, PsbF, PsbH, PsbI, PsbJ, PsbK, PsbL, PsbM, PsbT, PsbX, PsbY, PsbZ, Psb30/Ycf12, peripheral proteins PsbO, CyanoQ (PsbQ), PsbU, PsbV and a large number of cofactors. It forms dimeric complexes. Heme b serves as cofactor.

It is found in the cellular thylakoid membrane. This b-type cytochrome is tightly associated with the reaction center of photosystem II (PSII). PSII is a light-driven water:plastoquinone oxidoreductase that uses light energy to abstract electrons from H(2)O, generating O(2) and a proton gradient subsequently used for ATP formation. It consists of a core antenna complex that captures photons, and an electron transfer chain that converts photonic excitation into a charge separation. This is Cytochrome b559 subunit beta from Cyanothece sp. (strain PCC 7425 / ATCC 29141).